Here is a 327-residue protein sequence, read N- to C-terminus: MAWWKAWVEQEGVSVKGSPHFNPDPDAETLYKAMKGIGTNEQAIIDVLTKRSNAQRQQIAKSFKAQFGKDLIETLKSELSGKFERLIIALMYPPYRYEAKELYDAMKGIGTKEGVIIEILASRTKNQLQEIMKAYEEDYGSNLEEDIKADTSGYLERILVCLLQGSRDDLSGYVDPGLALQDAQDLYAAGEKICGTDEMKFITILCTRSATHLMRVFEEYEKIANKSIEDSIKSETHGSLEEAMLTVVKCTRNLHGYFAERLYFAMKGAGTLDGTLIRNIVSRSEIDLNLIKNQFKKMYGKTLSSMIMEDTSGDYKNALLNLVGSDL.

4 Annexin repeats span residues 21–92 (FNPD…ALMY), 93–164 (PPYR…CLLQ), 177–249 (GLAL…TVVK), and 253–324 (NLHG…NLVG). Residues Met-266, Gly-268, Gly-270, and Asp-310 each coordinate Ca(2+).

This sequence belongs to the annexin family.

In terms of biological role, this protein is an anticoagulant protein that acts as an indirect inhibitor of the thromboplastin-specific complex, which is involved in the blood coagulation cascade. The chain is Annexin A8 (ANXA8) from Bos taurus (Bovine).